We begin with the raw amino-acid sequence, 368 residues long: GLABROUS1 enhancer-binding protein-like (368 aa).

The tract at residues 1–123 (MAPKKAEEVV…TSDTEHVKKP (123 aa)) is disordered. The span at 17-31 (SEEEESGSSGEESES) shows a compositional bias: acidic residues. Positions 35–47 (VPKKVESSQKPES) are enriched in basic and acidic residues. The segment covering 84 to 97 (TSGSAATVPESSTA) has biased composition (polar residues). Residues 100-123 (PLKEAAPEAIKKQKTSDTEHVKKP) are compositionally biased toward basic and acidic residues.

It belongs to the GeBP family. Mono-, di- and oligomers. Associated with the Mediator complex. Interacts with MED6. Interacts with MED10A, MED28 and MED32. Interacts with DEK3.

The protein resides in the nucleus. Transcription factor that binds promoters containing the CryR2 element, 5'-ACATAWCT-3'. The DNA-binding activity is decreased upon direct physical interaction with the mediator subunits and is modulated by redox conditions. The oxidized protein is the preferential binding form. The chain is GLABROUS1 enhancer-binding protein-like from Arabidopsis thaliana (Mouse-ear cress).